Here is a 413-residue protein sequence, read N- to C-terminus: uncharacterized protein (413 aa).

Positions 1–22 (MKKSKASALLWLFSLVGFMLHA) are cleaved as a signal peptide.

It localises to the periplasm. Functionally, may be involved in ulvan degradation. Ulvan is the main polysaccharide component of the Ulvales (green seaweed) cell wall. It is composed of disaccharide building blocks comprising 3-sulfated rhamnose (Rha3S) linked to D-glucuronic acid (GlcA), L-iduronic acid (IduA), or D-xylose (Xyl). This is an uncharacterized protein from Formosa agariphila (strain DSM 15362 / KCTC 12365 / LMG 23005 / KMM 3901 / M-2Alg 35-1).